The primary structure comprises 234 residues: 2-amino-5-formylamino-6-ribosylaminopyrimidin-4(3H)-one 5'-monophosphate deformylase (234 aa).

Fe cation-binding residues include Glu-29, His-31, Asp-40, and His-109.

Belongs to the creatininase superfamily. FAPy deformylase family. In terms of assembly, homodimer. It depends on Fe(2+) as a cofactor. Requires Zn(2+) as cofactor.

The enzyme catalyses 2-amino-5-formylamino-6-(5-phospho-D-ribosylamino)pyrimidin-4(3H)-one + H2O = 2,5-diamino-6-(1-D-ribosylamino)pyrimidin-4(3H)-one 5'-phosphate + formate + H(+). The protein operates within cofactor biosynthesis; coenzyme F420 biosynthesis. Its pathway is cofactor biosynthesis; riboflavin biosynthesis. Functionally, catalyzes the hydrolysis of the formamide of 2-amino-5-formylamino-6-ribosylamino-4(3H)-pyrimidinone 5'-monophosphate (FAPy) to form 2,5-diamino-6-ribosylamino-4(3H)-pyrimidinone 5'-phosphate (APy). The sequence is that of 2-amino-5-formylamino-6-ribosylaminopyrimidin-4(3H)-one 5'-monophosphate deformylase from Methanobrevibacter ruminantium (strain ATCC 35063 / DSM 1093 / JCM 13430 / OCM 146 / M1) (Methanobacterium ruminantium).